We begin with the raw amino-acid sequence, 370 residues long: tRNA-specific 2-thiouridylase MnmA (370 aa).

ATP contacts are provided by residues 25–32 (ALSGGVDS) and L51. The Nucleophile role is filled by C112. C112 and C211 form a disulfide bridge. G137 serves as a coordination point for ATP. Residues 161-163 (KDQ) are interaction with tRNA. The active-site Cysteine persulfide intermediate is C211. The tract at residues 316 to 317 (RY) is interaction with tRNA.

It belongs to the MnmA/TRMU family.

Its subcellular location is the cytoplasm. The enzyme catalyses S-sulfanyl-L-cysteinyl-[protein] + uridine(34) in tRNA + AH2 + ATP = 2-thiouridine(34) in tRNA + L-cysteinyl-[protein] + A + AMP + diphosphate + H(+). Its function is as follows. Catalyzes the 2-thiolation of uridine at the wobble position (U34) of tRNA, leading to the formation of s(2)U34. In Synechococcus sp. (strain JA-3-3Ab) (Cyanobacteria bacterium Yellowstone A-Prime), this protein is tRNA-specific 2-thiouridylase MnmA.